The following is a 477-amino-acid chain: MSSSRKDHLGASSSEPLPVIIVGNGPSGICLSYLLSGYTPYTKPDAIHPHPLLQRKLTEAPGVSILDQDLDYLSEGLEGRSQSPVALLFDALLRPDTDFGGNMKSVLTWKHRKEHAIPHVVLGRNLPGGAWHSIEGSMVILSQGQWMGLPDLEVKDWMQKKRRGLRNSRATAGDIAHYYRDYVVKKGLGHNFVSGAVVTAVEWGTPDPSSCGAQDSSPLFQVSGFLTRNQAQQPFSLWARNVVLATGTFDSPARLGIPGEALPFIHHELSALEAATRVGAVTPASDPVLIIGAGLSAADAVLYARHYNIPVIHAFRRAVDDPGLVFNQLPKMLYPEYHKVHQMMREQSILSPSPYEGYRSLPRHQLLCFKEDCQAVFQDLEGVEKVFGVSLVLVLIGSHPDLSFLPGAGADFAVDPDQPLSAKRNPIDVDPFTYQSTRQEGLYAMGPLAGDNFVRFVQGGALAVASSLLRKETRKPP.

A Phosphoserine modification is found at Ser-12.

This sequence belongs to the OKL38 family. NADPH serves as cofactor. In terms of tissue distribution, ubiquitous. Highest expression in the ovary, testis, kidney, skeletal muscle and liver.

It is found in the midbody. In terms of biological role, monooxygenase catalytic activity. Involved in regulation of cytokinesis; promotes RHOA activity, probably acting locally at the midbody in late cytokinesis. Monooxygenase activity is involved in stabilizing transient structures between daughter cells, termed intercellular bridges, before abscission. Regulates differentiation and proliferation through the regulation of cell death. This is Oxidative stress-induced growth inhibitor 1 from Homo sapiens (Human).